Here is a 572-residue protein sequence, read N- to C-terminus: Proline--tRNA ligase (572 aa).

This sequence belongs to the class-II aminoacyl-tRNA synthetase family. ProS type 1 subfamily. Homodimer.

It localises to the cytoplasm. The catalysed reaction is tRNA(Pro) + L-proline + ATP = L-prolyl-tRNA(Pro) + AMP + diphosphate. In terms of biological role, catalyzes the attachment of proline to tRNA(Pro) in a two-step reaction: proline is first activated by ATP to form Pro-AMP and then transferred to the acceptor end of tRNA(Pro). As ProRS can inadvertently accommodate and process non-cognate amino acids such as alanine and cysteine, to avoid such errors it has two additional distinct editing activities against alanine. One activity is designated as 'pretransfer' editing and involves the tRNA(Pro)-independent hydrolysis of activated Ala-AMP. The other activity is designated 'posttransfer' editing and involves deacylation of mischarged Ala-tRNA(Pro). The misacylated Cys-tRNA(Pro) is not edited by ProRS. In Leuconostoc mesenteroides subsp. mesenteroides (strain ATCC 8293 / DSM 20343 / BCRC 11652 / CCM 1803 / JCM 6124 / NCDO 523 / NBRC 100496 / NCIMB 8023 / NCTC 12954 / NRRL B-1118 / 37Y), this protein is Proline--tRNA ligase.